The chain runs to 159 residues: Transcriptional repressor NrdR (159 aa).

The segment at 3–34 (CPFCGAEDTSVVDSRISEEGARIRRRRRCVEC) is a zinc-finger region. Residues 49-139 (PQVIKQDGNR…VYRSFEDVGD (91 aa)) enclose the ATP-cone domain.

Belongs to the NrdR family. Requires Zn(2+) as cofactor.

Functionally, negatively regulates transcription of bacterial ribonucleotide reductase nrd genes and operons by binding to NrdR-boxes. In Nitrosomonas europaea (strain ATCC 19718 / CIP 103999 / KCTC 2705 / NBRC 14298), this protein is Transcriptional repressor NrdR.